The sequence spans 215 residues: Urease accessory protein UreG 2 (215 aa).

Residue 11-18 (GPVGSGKT) participates in GTP binding.

It belongs to the SIMIBI class G3E GTPase family. UreG subfamily. In terms of assembly, homodimer. UreD, UreF and UreG form a complex that acts as a GTP-hydrolysis-dependent molecular chaperone, activating the urease apoprotein by helping to assemble the nickel containing metallocenter of UreC. The UreE protein probably delivers the nickel.

It localises to the cytoplasm. Functionally, facilitates the functional incorporation of the urease nickel metallocenter. This process requires GTP hydrolysis, probably effectuated by UreG. The polypeptide is Urease accessory protein UreG 2 (Methylorubrum populi (strain ATCC BAA-705 / NCIMB 13946 / BJ001) (Methylobacterium populi)).